Here is a 396-residue protein sequence, read N- to C-terminus: Acetate kinase (396 aa).

Position 7 (N7) interacts with Mg(2+). K14 is a binding site for ATP. R88 is a binding site for substrate. The active-site Proton donor/acceptor is the D145. Residues 205–209 (HLGNG), 279–281 (DFR), and 327–331 (GIGEN) each bind ATP. E381 contributes to the Mg(2+) binding site.

The protein belongs to the acetokinase family. In terms of assembly, homodimer. Mg(2+) serves as cofactor. It depends on Mn(2+) as a cofactor.

The protein localises to the cytoplasm. The catalysed reaction is acetate + ATP = acetyl phosphate + ADP. Its pathway is metabolic intermediate biosynthesis; acetyl-CoA biosynthesis; acetyl-CoA from acetate: step 1/2. Functionally, catalyzes the formation of acetyl phosphate from acetate and ATP. Can also catalyze the reverse reaction. The protein is Acetate kinase of Campylobacter jejuni subsp. jejuni serotype O:2 (strain ATCC 700819 / NCTC 11168).